The chain runs to 303 residues: Mycothiol acetyltransferase (303 aa).

N-acetyltransferase domains are found at residues 10-156 (ALPG…LAVP) and 162-303 (LAVR…SGPR). Position 41 (E41) interacts with 1D-myo-inositol 2-(L-cysteinylamino)-2-deoxy-alpha-D-glucopyranoside. 86–88 (LLV) provides a ligand contact to acetyl-CoA. E189, K228, and E235 together coordinate 1D-myo-inositol 2-(L-cysteinylamino)-2-deoxy-alpha-D-glucopyranoside. Residues 239-241 (LGV) and 246-252 (SGAGLGR) contribute to the acetyl-CoA site. Y272 is a 1D-myo-inositol 2-(L-cysteinylamino)-2-deoxy-alpha-D-glucopyranoside binding site. Acetyl-CoA is bound at residue 277–282 (NLRAVR).

Belongs to the acetyltransferase family. MshD subfamily. As to quaternary structure, monomer.

The catalysed reaction is 1D-myo-inositol 2-(L-cysteinylamino)-2-deoxy-alpha-D-glucopyranoside + acetyl-CoA = mycothiol + CoA + H(+). Catalyzes the transfer of acetyl from acetyl-CoA to desacetylmycothiol (Cys-GlcN-Ins) to form mycothiol. The chain is Mycothiol acetyltransferase from Kineococcus radiotolerans (strain ATCC BAA-149 / DSM 14245 / SRS30216).